Reading from the N-terminus, the 173-residue chain is Orotate phosphoribosyltransferase (173 aa).

5-phospho-alpha-D-ribose 1-diphosphate-binding positions include Arg87, Lys88, Lys91, and 113-121 (EDIATTGQS). Orotate-binding residues include Thr117 and Arg145.

Belongs to the purine/pyrimidine phosphoribosyltransferase family. PyrE subfamily. As to quaternary structure, homodimer. It depends on Mg(2+) as a cofactor.

The enzyme catalyses orotidine 5'-phosphate + diphosphate = orotate + 5-phospho-alpha-D-ribose 1-diphosphate. It participates in pyrimidine metabolism; UMP biosynthesis via de novo pathway; UMP from orotate: step 1/2. Catalyzes the transfer of a ribosyl phosphate group from 5-phosphoribose 1-diphosphate to orotate, leading to the formation of orotidine monophosphate (OMP). In Natronomonas pharaonis (strain ATCC 35678 / DSM 2160 / CIP 103997 / JCM 8858 / NBRC 14720 / NCIMB 2260 / Gabara) (Halobacterium pharaonis), this protein is Orotate phosphoribosyltransferase.